The primary structure comprises 76 residues: Conotoxin Am6.3 (76 aa).

Positions 1–22 (MKLTCMMIIAVLFLTAWTFATA) are cleaved as a signal peptide. 3 disulfides stabilise this stretch: Cys-52-Cys-67, Cys-59-Cys-71, and Cys-66-Cys-75.

Belongs to the conotoxin O1 superfamily. In terms of processing, is not hydroxylated. Expressed by the venom duct.

Its subcellular location is the secreted. In terms of biological role, probable toxin that inhibits ion channels. In Conus amadis (Amadis cone), this protein is Conotoxin Am6.3.